Here is a 201-residue protein sequence, read N- to C-terminus: MKLTPRQQEILDFIKSTLEVLGAPPTRMEISSAFGFASPNAAEDHLKALAKKGAIVLEPGSARGIRLVEQLGLPLIGSVAAGSPILAVENMQGRYALDASLFAPKADFLLKVRGLSMIDVGIFDGDLLAVHKTNQARDGQIVVARLDEEVTVKRLERSGGQIRLIAENPDFEPIIVDPEAVDFAIEGIAVGLIRGAVSKLS.

The H-T-H motif DNA-binding region spans 27 to 47; sequence RMEISSAFGFASPNAAEDHLK. Catalysis depends on for autocatalytic cleavage activity residues Ser-116 and Lys-153.

Belongs to the peptidase S24 family. Homodimer.

The catalysed reaction is Hydrolysis of Ala-|-Gly bond in repressor LexA.. Functionally, represses a number of genes involved in the response to DNA damage (SOS response), including recA and lexA. In the presence of single-stranded DNA, RecA interacts with LexA causing an autocatalytic cleavage which disrupts the DNA-binding part of LexA, leading to derepression of the SOS regulon and eventually DNA repair. The protein is LexA repressor of Dechloromonas aromatica (strain RCB).